A 735-amino-acid chain; its full sequence is Type-3 glutamine synthetase (735 aa).

The 95-residue stretch at 89–183 (THYCHWFLPL…IPTAFCSWTG (95 aa)) folds into the GS beta-grasp domain. The GS catalytic domain maps to 188–621 (QKTPLLRSME…SLYDLVSTLV (434 aa)).

It belongs to the glutamine synthetase family. Type 3 subfamily. Homohexamer.

It carries out the reaction L-glutamate + NH4(+) + ATP = L-glutamine + ADP + phosphate + H(+). This chain is Type-3 glutamine synthetase (glnA3), found in Dictyostelium discoideum (Social amoeba).